We begin with the raw amino-acid sequence, 209 residues long: Probable calcium-binding protein CML36 (209 aa).

Residues 22-59 (SKSPTAFSFGSASSSSGQDCKNSGGDGGGGSVTPTSIL) are disordered. Residues 27–38 (AFSFGSASSSSG) show a composition bias toward low complexity. EF-hand domains lie at 66-101 (YSYV…LGPD), 103-138 (LTEE…LDPA), 139-174 (RDST…IGDE), and 176-209 (CTLD…DLQR). Aspartate 79, aspartate 81, aspartate 83, and aspartate 90 together coordinate Ca(2+). Aspartate 152, aspartate 154, aspartate 156, glutamate 163, aspartate 189, aspartate 191, aspartate 193, and glutamate 200 together coordinate Ca(2+).

In terms of biological role, potential calcium sensor. The sequence is that of Probable calcium-binding protein CML36 (CML36) from Arabidopsis thaliana (Mouse-ear cress).